Consider the following 235-residue polypeptide: MKILVVCSGGLDSVSLADKMAAEHELIGLISFDYGQRHKKELDFAALAAKRLGVPHQIIDMTNIGASLTGSALTDDLDVPDGHYAEETMKITVVPNRNAIMLAIAFGVAAAKKADAVALAVHGGDHFIYPDCRPGFIDAFQIMQAHALEGYADVKLLAPFVTVSKADIVTEGAKYGTPFDQTWSCYKGGARHCGRCGTCVERREAFHLAGVTDPTDYEDPDFWVSATSGFQAREV.

An ATP-binding site is contributed by 7-17 (CSGGLDSVSLA). The Zn(2+) site is built by Cys185, Cys193, Cys196, and Cys199.

This sequence belongs to the QueC family. Requires Zn(2+) as cofactor.

The catalysed reaction is 7-carboxy-7-deazaguanine + NH4(+) + ATP = 7-cyano-7-deazaguanine + ADP + phosphate + H2O + H(+). It functions in the pathway purine metabolism; 7-cyano-7-deazaguanine biosynthesis. Functionally, catalyzes the ATP-dependent conversion of 7-carboxy-7-deazaguanine (CDG) to 7-cyano-7-deazaguanine (preQ(0)). The sequence is that of 7-cyano-7-deazaguanine synthase from Allorhizobium ampelinum (strain ATCC BAA-846 / DSM 112012 / S4) (Agrobacterium vitis (strain S4)).